We begin with the raw amino-acid sequence, 328 residues long: Phenylalanine--tRNA ligase alpha subunit (328 aa).

Glutamate 253 lines the Mg(2+) pocket.

Belongs to the class-II aminoacyl-tRNA synthetase family. Phe-tRNA synthetase alpha subunit type 1 subfamily. Tetramer of two alpha and two beta subunits. Requires Mg(2+) as cofactor.

The protein localises to the cytoplasm. It carries out the reaction tRNA(Phe) + L-phenylalanine + ATP = L-phenylalanyl-tRNA(Phe) + AMP + diphosphate + H(+). The sequence is that of Phenylalanine--tRNA ligase alpha subunit from Chromobacterium violaceum (strain ATCC 12472 / DSM 30191 / JCM 1249 / CCUG 213 / NBRC 12614 / NCIMB 9131 / NCTC 9757 / MK).